Reading from the N-terminus, the 103-residue chain is Large ribosomal subunit protein bL21 (103 aa).

Belongs to the bacterial ribosomal protein bL21 family. As to quaternary structure, part of the 50S ribosomal subunit. Contacts protein L20.

Functionally, this protein binds to 23S rRNA in the presence of protein L20. This Chromobacterium violaceum (strain ATCC 12472 / DSM 30191 / JCM 1249 / CCUG 213 / NBRC 12614 / NCIMB 9131 / NCTC 9757 / MK) protein is Large ribosomal subunit protein bL21.